Consider the following 151-residue polypeptide: Nucleoside diphosphate kinase (151 aa).

K11, F59, R87, T93, R104, and N114 together coordinate ATP. The Pros-phosphohistidine intermediate role is filled by H117.

It belongs to the NDK family. As to quaternary structure, homotetramer. The cofactor is Mg(2+).

It localises to the cytoplasm. The catalysed reaction is a 2'-deoxyribonucleoside 5'-diphosphate + ATP = a 2'-deoxyribonucleoside 5'-triphosphate + ADP. It catalyses the reaction a ribonucleoside 5'-diphosphate + ATP = a ribonucleoside 5'-triphosphate + ADP. In terms of biological role, major role in the synthesis of nucleoside triphosphates other than ATP. The ATP gamma phosphate is transferred to the NDP beta phosphate via a ping-pong mechanism, using a phosphorylated active-site intermediate. The sequence is that of Nucleoside diphosphate kinase from Prochlorococcus marinus (strain SARG / CCMP1375 / SS120).